Here is a 1580-residue protein sequence, read N- to C-terminus: Transcriptional activator GLI3 (1580 aa).

Position 1 is an N-acetylmethionine (M1). Polar residues-rich tracts occupy residues 1–10 (MEAQSHSSTT) and 58–78 (ITMQ…PSTS). Positions 1–79 (MEAQSHSSTT…KVSEEPSTSS (79 aa)) are disordered. R175 carries the post-translational modification Omega-N-methylarginine. Residues 368 to 475 (QSLGSAFGHS…DKDESKQEPE (108 aa)) form a disordered region. Polar residues predominate over residues 401-427 (NPVQVSSGPSESSQNKPTSESAVSSTG). Glycyl lysine isopeptide (Lys-Gly) (interchain with G-Cter in SUMO2) cross-links involve residues K438 and K462. A compositionally biased stretch (basic and acidic residues) spans 461–474 (VKEEGDKDESKQEP). C2H2-type zinc fingers lie at residues 480–505 (TNCH…NNDH), 513–540 (FVCR…MRRH), 546–570 (HKCT…LRSH), 576–601 (YVCE…NRTH), and 607–632 (YVCK…KTVH). Residues 620-728 (DPSSLRKHVK…PISNYSNSGL (109 aa)) are disordered. The span at 632-648 (HGPEAHVTKKQRGDIHP) shows a compositional bias: basic and acidic residues. S664 bears the Phosphoserine mark. Basic and acidic residues predominate over residues 684 to 699 (SKREECLQVKTVKAEK). The segment covering 703-726 (SQPSPGGQSSCSSQQSPISNYSNS) has biased composition (low complexity). The segment at 745-845 (DETPIMDSTI…VDVTMLNMLN (101 aa)) is mediates interaction with DZIP1. K773 is covalently cross-linked (Glycyl lysine isopeptide (Lys-Gly) (interchain with G-Cter in ubiquitin)). K779 participates in a covalent cross-link: Glycyl lysine isopeptide (Lys-Gly) (interchain with G-Cter in SUMO2); alternate. A Glycyl lysine isopeptide (Lys-Gly) (interchain with G-Cter in ubiquitin); alternate cross-link involves residue K779. Glycyl lysine isopeptide (Lys-Gly) (interchain with G-Cter in ubiquitin) cross-links involve residues K784 and K800. Residues S849, S865, S877, and S907 each carry the phosphoserine; by PKA modification. Over residues 863-882 (RSSGISPCFSSRRSSEASQA) the composition is skewed to low complexity. Residues 863 to 918 (RSSGISPCFSSRRSSEASQAEGRPQNVSVADSYDPISTDASRRSSEASQSDGLPSL) are disordered. A compositionally biased stretch (polar residues) spans 908–918 (EASQSDGLPSL). Residues S980 and S1006 each carry the phosphoserine; by PKA modification. The segment at 981–1042 (DGGAHGYGRR…PAMATSAEKR (62 aa)) is disordered.

The protein belongs to the GLI C2H2-type zinc-finger protein family. The full-length GLI3 form (GLI3FL) interacts with SUFU and this interaction regulates the formation of either repressor or activator forms of GLI3. Its association with SUFU is regulated by Hh signaling and dissociation of the SUFU-GLI3 interaction requires the presence of the ciliary motor KIF3A. Interacts with KIF7. The activator form of GLI3 (GLI3A) but not the repressor form (GLI3R) can interact with TRPS1. The phosphorylated form interacts with BTRC. Interacts with ZIC1. Interacts with ZIC3 (via C2H2-type domains 3, 4 and 5); the interaction enhances its transcriptional activity. Interacts with WRD11; the interaction associates EMX1 with GLI3. Interacts with DZIP1; retains GLI3 within the cytoplasm. Post-translationally, phosphorylated on multiple sites by protein kinase A (PKA) and phosphorylation by PKA primes further phosphorylation by CK1 and GSK3. Phosphorylated by DYRK2 (in vitro). Phosphorylation is essential for its proteolytic processing. In terms of processing, transcriptional repressor GLI3R, a C-terminally truncated form, is generated from the full-length GLI3 protein (GLI3FL/GLI3-190) through proteolytic processing. This process requires PKA-primed phosphorylation of GLI3, ubiquitination of GLI3 and the presence of BTRC. GLI3FL is complexed with SUFU in the cytoplasm and is maintained in a neutral state. Without the Hh signal, the SUFU-GLI3 complex is recruited to cilia, leading to the efficient processing of GLI3FL into GLI3R. GLI3R formation leads to its dissociation from SUFU, allowing it to translocate into the nucleus, and repress Hh target genes. When Hh signaling is initiated, SUFU dissociates from GLI3FL and this has two consequences. First, GLI3R production is halted. Second, free GLI3FL translocates to the nucleus, where it is phosphorylated, destabilized, and converted to a transcriptional activator (GLI3A). Phosphorylated in vitro by ULK3. As to expression, is expressed in a wide variety of normal adult tissues, including lung, colon, spleen, placenta, testis, and myometrium.

It localises to the nucleus. It is found in the cytoplasm. Its subcellular location is the cell projection. The protein resides in the cilium. Has a dual function as a transcriptional activator and a repressor of the sonic hedgehog (Shh) pathway, and plays a role in limb development. The full-length GLI3 form (GLI3FL) after phosphorylation and nuclear translocation, acts as an activator (GLI3A) while GLI3R, its C-terminally truncated form, acts as a repressor. A proper balance between the GLI3 activator and the repressor GLI3R, rather than the repressor gradient itself or the activator/repressor ratio gradient, specifies limb digit number and identity. In concert with TRPS1, plays a role in regulating the size of the zone of distal chondrocytes, in restricting the zone of PTHLH expression in distal cells and in activating chondrocyte proliferation. Binds to the minimal GLI-consensus sequence 5'-GGGTGGTC-3'. This Homo sapiens (Human) protein is Transcriptional activator GLI3 (GLI3).